The following is a 246-amino-acid chain: Serine protease 1 (246 aa).

Residues 1–15 (MSALLILALVGAAVA) form the signal peptide. A propeptide spans 16–23 (FPLEDDDK) (activation peptide). The Peptidase S1 domain occupies 24–244 (IVGGYTCPEH…FVGWIQDTIA (221 aa)). Disulfide bonds link Cys-30–Cys-160, Cys-48–Cys-64, Cys-132–Cys-233, Cys-139–Cys-206, Cys-171–Cys-185, and Cys-196–Cys-220. His-63 functions as the Charge relay system in the catalytic mechanism. Positions 75, 77, 80, and 85 each coordinate Ca(2+). Residue Asp-107 is the Charge relay system of the active site. Ser-200 serves as the catalytic Charge relay system.

This sequence belongs to the peptidase S1 family. As to quaternary structure, interacts with SERPINA1. Requires Ca(2+) as cofactor.

The protein resides in the secreted. Its subcellular location is the extracellular space. The enzyme catalyses Preferential cleavage: Arg-|-Xaa, Lys-|-Xaa.. The polypeptide is Serine protease 1 (Rattus norvegicus (Rat)).